The primary structure comprises 647 residues: Calmodulin-binding protein 60 B (647 aa).

Residues 1 to 10 show a composition bias toward polar residues; it reads MMDSGNNNMN. Residues 1–26 form a disordered region; that stretch reads MMDSGNNNMNRAKRNLDGNDDDQPER. The interval 8–85 is calmodulin-binding; it reads NMNRAKRNLD…TGSSGSSPKR (78 aa). The Nuclear localization signal motif lies at 12 to 19; that stretch reads AKRNLDGN. The interval 155 to 278 is DNA-binding; the sequence is EDDEDWTQEE…AFHKKLTAEG (124 aa).

This sequence belongs to the plant ACBP60 protein family. Interacts with calmodulin (CaM). In terms of tissue distribution, expressed in leaves, stems, flowers, developing seeds and root.

It localises to the nucleus. Functionally, transcription activator that binds DNA in a sequence-specific manner, likely 5'-GAAATTTTGG-3', to promote the expression of target genes. In Arabidopsis thaliana (Mouse-ear cress), this protein is Calmodulin-binding protein 60 B.